The sequence spans 707 residues: MMFDKHVKTFQYGNQTVTLETGEIARQAAAAVKVSMGDTVVLVAVTTNKEVKEGQDFFPLTVDYLERTYAAGKIPGGFFKREGKQSEKEILTSRLIDRPIRPLFPEGFYHDIQIVAMVVSVDPEIDSDIPAMLGASAALVLSGVPFAGPIGAARVGYVNGVYVLNPTKAELAKSQLDLVVAGTSKAVLMVESEAKILPEDVMLGAVVYGHDQMQVAINAINEFADEVNPELWDWKAPETNEELVAKVRGIAGETIKEAFKIRQKQARSAKLDEAWSAVKEALITEETDTLAANEIKGIFKHLEADVVRSQILDGQPRIDGRDTRTVRPLNIQTSVLPRTHGSALFTRGETQALAVATLGTSRDEQIIDALSGEYTDRFMLHYNFPPYSTGEVGRMGAPKRREIGHGRLAKRALLAVLPKPEDFSYTMRVVSEITESNGSSSMASVCGGCLSLLSAGVPLKAHVAGIAMGLILEGNKFAVLTDILGDEDHLGDMDFKVAGTTEGVTALQMDIKIQGITKEIMQIALAQAKEARLHILDQMKAAVAGPQELSAHAPRLFTMKINQDKIREVIGKGGETIRSITAETGTEINIAEDGTITIAATTQEAGDAAKKRIEQITAEVEVGKVYEGTVVKILDNNVGAIVSVMPGKDGLVHISQIAHERVRNVGDYLQVGQVVNVKALEVDDRGRVRLSIKALLDAPAREENAAE.

Mg(2+)-binding residues include Asp488 and Asp494. The region spanning 554–613 (PRLFTMKINQDKIREVIGKGGETIRSITAETGTEINIAEDGTITIAATTQEAGDAAKKRI) is the KH domain. In terms of domain architecture, S1 motif spans 623 to 693 (GKVYEGTVVK…DRGRVRLSIK (71 aa)).

The protein belongs to the polyribonucleotide nucleotidyltransferase family. Mg(2+) is required as a cofactor.

It localises to the cytoplasm. The enzyme catalyses RNA(n+1) + phosphate = RNA(n) + a ribonucleoside 5'-diphosphate. Its function is as follows. Involved in mRNA degradation. Catalyzes the phosphorolysis of single-stranded polyribonucleotides processively in the 3'- to 5'-direction. This is Polyribonucleotide nucleotidyltransferase from Neisseria meningitidis serogroup B (strain ATCC BAA-335 / MC58).